We begin with the raw amino-acid sequence, 367 residues long: tRNA(Ile)-lysidine synthase, chloroplastic (367 aa).

64-69 (SGGQDS) lines the ATP pocket.

Belongs to the tRNA(Ile)-lysidine synthase family.

The protein localises to the plastid. It is found in the chloroplast. It catalyses the reaction cytidine(34) in tRNA(Ile2) + L-lysine + ATP = lysidine(34) in tRNA(Ile2) + AMP + diphosphate + H(+). In terms of biological role, ligates lysine onto the cytidine present at position 34 of the AUA codon-specific tRNA(Ile) that contains the anticodon CAU, in an ATP-dependent manner. Cytidine is converted to lysidine, thus changing the amino acid specificity of the tRNA from methionine to isoleucine. The protein is tRNA(Ile)-lysidine synthase, chloroplastic of Nephroselmis olivacea (Green alga).